The sequence spans 327 residues: MIYQMQMPAKIEVDEATHTEMFGRFIAQPLERGYGVTIGNVMRRVLLASLPGTAITGVKIEGVYHEFSAIEGVREDVPEIVLNLKRVRFKSNCKRSCKTSLSIAGTKDFTAGDIIAKEGEFEVLNKDLHIATVNDGSVLNIEIYIGRGRGYLPAEENHPEGMPIGFIAIDAIFTPIRNVKFTVENTRVGQRTDYEKMILDVETDGSIAPDDSISLAGKIINDHIMYFANFSPTEEEFTEEEFKQQDDEFESMRKLLHTKIEDLDLSVRSHNCLRLAEIDTIGDLVSRKEDELLNYKNFGKKSLTELKEQLEKFDLKFGMDITRYQMK.

Residues 1–231 form an alpha N-terminal domain (alpha-NTD) region; the sequence is MIYQMQMPAK…DHIMYFANFS (231 aa). The interval 247–327 is alpha C-terminal domain (alpha-CTD); that stretch reads DEFESMRKLL…GMDITRYQMK (81 aa).

The protein belongs to the RNA polymerase alpha chain family. In terms of assembly, homodimer. The RNAP catalytic core consists of 2 alpha, 1 beta, 1 beta' and 1 omega subunit. When a sigma factor is associated with the core the holoenzyme is formed, which can initiate transcription.

The enzyme catalyses RNA(n) + a ribonucleoside 5'-triphosphate = RNA(n+1) + diphosphate. In terms of biological role, DNA-dependent RNA polymerase catalyzes the transcription of DNA into RNA using the four ribonucleoside triphosphates as substrates. The protein is DNA-directed RNA polymerase subunit alpha of Chlorobium phaeobacteroides (strain DSM 266 / SMG 266 / 2430).